Consider the following 240-residue polypeptide: Uridylate kinase (240 aa).

12 to 15 (KLSG) lines the ATP pocket. The segment at 20–25 (GDKGFG) is involved in allosteric activation by GTP. Glycine 54 contributes to the UMP binding site. 2 residues coordinate ATP: glycine 55 and arginine 59. UMP-binding positions include aspartate 74 and 135 to 142 (TGSPYFST). 3 residues coordinate ATP: asparagine 163, tyrosine 169, and aspartate 172.

Belongs to the UMP kinase family. As to quaternary structure, homohexamer.

It is found in the cytoplasm. The enzyme catalyses UMP + ATP = UDP + ADP. It functions in the pathway pyrimidine metabolism; CTP biosynthesis via de novo pathway; UDP from UMP (UMPK route): step 1/1. With respect to regulation, allosterically activated by GTP. Inhibited by UTP. In terms of biological role, catalyzes the reversible phosphorylation of UMP to UDP. The chain is Uridylate kinase from Levilactobacillus brevis (strain ATCC 367 / BCRC 12310 / CIP 105137 / JCM 1170 / LMG 11437 / NCIMB 947 / NCTC 947) (Lactobacillus brevis).